The following is a 291-amino-acid chain: Probable endonuclease 4 (291 aa).

Residues His-72, His-112, Glu-147, Asp-181, His-184, His-215, Asp-228, His-230, and Glu-260 each coordinate Zn(2+).

Belongs to the AP endonuclease 2 family. Requires Zn(2+) as cofactor.

It carries out the reaction Endonucleolytic cleavage to 5'-phosphooligonucleotide end-products.. Its function is as follows. Endonuclease IV plays a role in DNA repair. It cleaves phosphodiester bonds at apurinic or apyrimidinic (AP) sites, generating a 3'-hydroxyl group and a 5'-terminal sugar phosphate. The polypeptide is Probable endonuclease 4 (Mycoplasma genitalium (strain ATCC 33530 / DSM 19775 / NCTC 10195 / G37) (Mycoplasmoides genitalium)).